Here is an 883-residue protein sequence, read N- to C-terminus: Alanine--tRNA ligase (883 aa).

The Zn(2+) site is built by His-563, His-567, Cys-677, and His-681.

It belongs to the class-II aminoacyl-tRNA synthetase family. Zn(2+) is required as a cofactor.

The protein localises to the cytoplasm. It carries out the reaction tRNA(Ala) + L-alanine + ATP = L-alanyl-tRNA(Ala) + AMP + diphosphate. Its function is as follows. Catalyzes the attachment of alanine to tRNA(Ala) in a two-step reaction: alanine is first activated by ATP to form Ala-AMP and then transferred to the acceptor end of tRNA(Ala). Also edits incorrectly charged Ser-tRNA(Ala) and Gly-tRNA(Ala) via its editing domain. The polypeptide is Alanine--tRNA ligase (Cereibacter sphaeroides (strain ATCC 17029 / ATH 2.4.9) (Rhodobacter sphaeroides)).